The chain runs to 1627 residues: Surface protein G (1627 aa).

A signal peptide spans 1–50 (MRDKKGPVNKRVDFLSNKLNKYSIRKFTVGTASILIGSLMYLGTQQEAEA). The short motif at 22-33 (YSIRKFTVGTAS) is the YSIRK-G/S signaling motif element. The ligand binding A region, squamous nasal epithelial cell binding stretch occupies residues 51-418 (AENNIENPTT…KGSEFTFTPE (368 aa)). Disordered regions lie at residues 74-143 (EVTN…VRKA), 440-467 (KFNP…TTPT), and 496-1601 (EYGP…TGLE). Basic and acidic residues-rich tracts occupy residues 96 to 120 (DTIE…KEVA), 451 to 461 (KVTREGQKGEK), 505 to 523 (GHRD…EEVP), 554 to 570 (SIVE…RKFN), 579 to 589 (KVTREGQKGEK), 606 to 619 (SKGE…KDPI), 633 to 651 (GHRD…EEVP), 682 to 698 (SIVE…RKFN), 707 to 717 (KVTREGQKGEK), 736 to 747 (GEPKEEITKDPI), 761 to 779 (GHRD…EEVP), 810 to 826 (SIVE…RKFN), 835 to 845 (KVTREGQKGEK), 862 to 875 (SKGE…KDPI), 889 to 907 (GHRD…EEVP), 938 to 954 (SIVE…RKFN), 963 to 973 (KVTREGQKGEK), 990 to 1003 (SKGE…KDPI), 1017 to 1035 (GHRD…EEVP), 1066 to 1082 (SIVE…RKFN), 1091 to 1101 (KVTREGQKGEK), 1118 to 1131 (SKGE…KDPI), 1145 to 1163 (GHRD…EEVP), 1194 to 1210 (SIVE…RKFN), 1219 to 1229 (KVTREGQKGEK), 1246 to 1259 (SKGE…KDPI), 1273 to 1291 (GHRD…EEVP), 1322 to 1338 (SIVE…RKFN), 1347 to 1357 (KVTREGQKGEK), 1374 to 1387 (SKGE…KDPV), 1431 to 1442 (KVIEEPVDDVIK), and 1459 to 1478 (FETK…RVKQ). One can recognise a G5 1 domain in the interval 419–501 (APKTITELEK…NELTEYGPET (83 aa)). Residues 547 to 629 (YGPVKGDSIV…NELTEYGPET (83 aa)) enclose the G5 2 domain. Residues 675-757 (YGPVKGDSIV…NELTEYGPET (83 aa)) form the G5 3 domain. Positions 803-885 (YGPVKGDSIV…NELTEYGPET (83 aa)) constitute a G5 4 domain. The G5 5 domain maps to 931-1013 (YGPVKGDSIV…NELTEYGPET (83 aa)). The 83-residue stretch at 1059–1141 (YGPVKGDSIV…NELTEYGPET (83 aa)) folds into the G5 6 domain. In terms of domain architecture, G5 7 spans 1187-1269 (YGPVKGDSIV…NELTEYGPET (83 aa)). In terms of domain architecture, G5 8 spans 1315-1397 (YGPVKGDSIV…NELTEFGGEK (83 aa)). One can recognise a G5 9 domain in the interval 1443 to 1525 (HGPKTGTPET…DKIVEFGGEK (83 aa)). Residues 1481–1495 (QPGSKTITTPITVNP) are compositionally biased toward polar residues. The span at 1509 to 1539 (EITKQPVDKIVEFGGEKPKDPKGPENPEKPS) shows a compositional bias: basic and acidic residues. The LPXTG sorting signal signature appears at 1595–1599 (LPKTG). Pentaglycyl murein peptidoglycan amidated threonine is present on Thr1598. Residues 1599 to 1627 (GLESTQKGLIFSSIIGIAGLMLLARRRKN) constitute a propeptide, removed by sortase.

It localises to the secreted. It is found in the cell wall. Its function is as follows. Promotes adhesion of bacterial cells to human squamous nasal epithelial cells, a phenomenon which is likely to be important in nasal colonization. Forms short, extremely dense and thin fibrils all over the bacterial surface. Does not bind to either buccal cells or non-differentiated keratinocytes. Promotes cellular aggregation leading to biofilm formation. In Staphylococcus aureus (strain NCTC 8325 / PS 47), this protein is Surface protein G (sasG).